The following is a 613-amino-acid chain: MLTATPLPHQLLATFLLVLASATQPAVPASTDRAALLAFRASLSPPSRAALSSWSGPLSPSWLGVSLHPATAPAPSVTTPSVAELSLRGLNLTGVIPAAPLALLRRLRTLDLSANALSGELPCSLPRSLLALDLSRNALSGAVPTCLPSSLPALRTLNLSANFLRLPLSPRLSFPARLAALDLSRNAISGAVPPRIVADPDNSALLLLDLSHNRFSGEIPAGIAAVRSLQGLFLADNQLSGDIPPGIGNLTYLQVLDLSNNRLSGSVPAGLAGCFQLLYLQLGGNQLSGALRPELDALASLKVLDLSNNKISGEIPLPLAGCRSLEVVDLSGNEISGELSSAVAKWLSLKFLSLAGNQLSGHLPDWMFSFPLLQWLDLSSNKFVGFIPDGGFNVSEVLNGGGGQGTPSESVLPPQLFVSASVDTVSWQLDLGYDVQATTGIDLSGNELCGEIPEGLVDMKGLEYLNLSCNYLAGQIPAGLGGMGRLHTLDFSHNGLSGEVPPGIAAMTVLEVLNLSYNSLSGPLPTTKFPGALAGNPGICSGKGCSENARTPEGKMEGSNHRGWLGGWHGENGWVSLGAFCISTMTSFYVSLATLLCSSNARNFVFRPVRVEY.

Residues 1 to 28 (MLTATPLPHQLLATFLLVLASATQPAVP) form the signal peptide. At 29 to 573 (ASTDRAALLA…WLGGWHGENG (545 aa)) the chain is on the extracellular side. LRR repeat units lie at residues 79-103 (TPSVAELSLRGLNLTGVIPAAPLAL), 104-128 (LRRLRTLDLSANALSGELPCSLPRS), 130-150 (LALDLSRNALSGAVPTCLPSS), 151-176 (LPALRTLNLSANFLRLPLSPRLSFPA), 178-199 (LAALDLSRNAISGAVPPRIVAD), 202-226 (NSALLLLDLSHNRFSGEIPAGIAAV), 227-250 (RSLQGLFLADNQLSGDIPPGIGNL), 251-274 (TYLQVLDLSNNRLSGSVPAGLAGC), 276-297 (QLLYLQLGGNQLSGALRPELDA), 298-322 (LASLKVLDLSNNKISGEIPLPLAGC), 324-346 (SLEVVDLSGNEISGELSSAVAKW), 347-370 (LSLKFLSLAGNQLSGHLPDWMFSF), 372-394 (LLQWLDLSSNKFVGFIPDGGFNV), 435-459 (VQATTGIDLSGNELCGEIPEGLVDM), 460-483 (KGLEYLNLSCNYLAGQIPAGLGGM), 484-507 (GRLHTLDFSHNGLSGEVPPGIAAM), and 508-531 (TVLEVLNLSYNSLSGPLPTTKFPG). N91 is a glycosylation site (N-linked (GlcNAc...) asparagine). The N-linked (GlcNAc...) asparagine glycan is linked to N158. N249 is a glycosylation site (N-linked (GlcNAc...) asparagine). The N-linked (GlcNAc...) asparagine glycan is linked to N393. N466 carries N-linked (GlcNAc...) asparagine glycosylation. A glycan (N-linked (GlcNAc...) asparagine) is linked at N514. Residues 574–597 (WVSLGAFCISTMTSFYVSLATLLC) traverse the membrane as a helical segment. Residues 598-613 (SSNARNFVFRPVRVEY) are Cytoplasmic-facing.

In terms of tissue distribution, expressed in ear primordia, vegetative apex and young leaf tissues. Barely detected in expanded leaf tissues and not expressed in roots.

The protein localises to the cell membrane. Its function is as follows. Receptor-like protein that regulates shoot meristem proliferation. Based on additive and synergistic phenotypes of double mutants, it is probable that unlike CLV1 and CLV2 in A.thaliana, FAE2 and TD1 do not function exclusively in a single pathway. This is Leucine-rich repeat receptor-like protein FASCIATED EAR2 (FEA2) from Zea mays (Maize).